The following is a 693-amino-acid chain: MQTIKIYENKGVYKVVIGEPFPPIEFPLEQKISSNKSLSELGLTIVQQGNKVIVEKSLDLKEHIIGLGEKAFELDRKRKRYVMYNVDAGAYKKYQDPLYVSIPLFISVKDGVATGYFFNSASKVIFDVGLEEYDKVIVTIPEDSVEFYVIEGPRIEDVLEKYTELTGKPFLPPMWAFGYMISRYSYYPQDKVVELVDIMQKEGFRVAGVFLDIHYMDSYKLFTWHPYRFPEPKKLIDELHKRNVKLITIVDHGIRVDQNYSPFLSGMGKFCEIESGELFVGKMWPGTTVYPDFFREDTREWWAGLISEWLSQGVDGIWLDMNEPTDFSRAIEIRDVLSSLPVQFRDDRLVTTFPDNVVHYLRGKRVKHEKVRNAYPLYEAMATFKGFRTSHRNEIFILSRAGYAGIQRYAFIWTGDNTPSWDDLKLQLQLVLGLSISGVPFVGCDIGGFQGRNFAEIDNSMDLLVKYYALALFFPFYRSHKATDGIDTEPVFLPDYYKEKVKEIVELRYKFLPYIYSLALEASEKGHPVIRPLFYEFQDDDDMYRIEDEYMVGKYLLYAPIVSKEESRLVTLPRGKWYNYWNGEIINGKSVVKSTHELPIYLREGSIIPLEGDELIVYGETSFKRYDNAEITSSSNEIKFSREIYVSKLTITSEKPVSKIIVDDSKEIQVEKTMQNTYVAKINQKIRGKINLE.

Residues aspartate 320 and glutamate 323 contribute to the active site. Catalysis depends on aspartate 416, which acts as the Proton donor.

The protein belongs to the glycosyl hydrolase 31 family.

The protein resides in the cytoplasm. The enzyme catalyses Hydrolysis of terminal, non-reducing (1-&gt;4)-linked alpha-D-glucose residues with release of alpha-D-glucose.. In terms of biological role, major soluble alpha-glucosidase. In Saccharolobus solfataricus (strain ATCC 35092 / DSM 1617 / JCM 11322 / P2) (Sulfolobus solfataricus), this protein is Alpha-glucosidase (malA).